Consider the following 155-residue polypeptide: Ribonuclease H (155 aa).

The RNase H type-1 domain occupies 1 to 142; sequence MLKQVEIFTD…CDELARAAAS (142 aa). The Mg(2+) site is built by aspartate 10, glutamate 48, aspartate 70, and aspartate 134.

Belongs to the RNase H family. In terms of assembly, monomer. It depends on Mg(2+) as a cofactor.

Its subcellular location is the cytoplasm. The catalysed reaction is Endonucleolytic cleavage to 5'-phosphomonoester.. In terms of biological role, endonuclease that specifically degrades the RNA of RNA-DNA hybrids. This is Ribonuclease H from Klebsiella pneumoniae (strain 342).